The following is a 760-amino-acid chain: Catalase-peroxidase (760 aa).

Residues 1-22 (MSQGECPVKKVPNVAGSGTRNT) form a disordered region. Positions 93 to 242 (WHSAGTYRVT…LAAAHMGLIY (150 aa)) form a cross-link, tryptophyl-tyrosyl-methioninium (Trp-Tyr) (with M-268). Residue histidine 94 is the Proton acceptor of the active site. The disordered stretch occupies residues 206-226 (KGEGIMDGDQHKTDKSEPHTS). A compositionally biased stretch (basic and acidic residues) spans 213–226 (GDQHKTDKSEPHTS). Positions 242–268 (YVNPEGPEGIPDPVAAAHDIRTTFGRM) form a cross-link, tryptophyl-tyrosyl-methioninium (Tyr-Met) (with W-93). Histidine 283 is a binding site for heme b.

This sequence belongs to the peroxidase family. Peroxidase/catalase subfamily. As to quaternary structure, homodimer or homotetramer. Requires heme b as cofactor. Post-translationally, formation of the three residue Trp-Tyr-Met cross-link is important for the catalase, but not the peroxidase activity of the enzyme.

It localises to the cytoplasm. It carries out the reaction H2O2 + AH2 = A + 2 H2O. It catalyses the reaction 2 H2O2 = O2 + 2 H2O. Functionally, bifunctional enzyme with both catalase and broad-spectrum peroxidase activity. The sequence is that of Catalase-peroxidase from Pyrenophora tritici-repentis (strain Pt-1C-BFP) (Wheat tan spot fungus).